The sequence spans 295 residues: Glutamyl-Q tRNA(Asp) synthetase (295 aa).

L-glutamate-binding positions include 5 to 9 (RFAPS) and glutamate 41. Residues 8-18 (PSPTGLLHIGS) carry the 'HIGH' region motif. Zn(2+) is bound by residues cysteine 97, cysteine 99, tyrosine 117, and cysteine 121. L-glutamate contacts are provided by tyrosine 178 and arginine 196. Residues 234 to 238 (KWSKQ) carry the 'KMSKS' region motif. Lysine 237 is a binding site for ATP.

It belongs to the class-I aminoacyl-tRNA synthetase family. GluQ subfamily. It depends on Zn(2+) as a cofactor.

In terms of biological role, catalyzes the tRNA-independent activation of glutamate in presence of ATP and the subsequent transfer of glutamate onto a tRNA(Asp). Glutamate is transferred on the 2-amino-5-(4,5-dihydroxy-2-cyclopenten-1-yl) moiety of the queuosine in the wobble position of the QUC anticodon. The chain is Glutamyl-Q tRNA(Asp) synthetase from Neisseria gonorrhoeae (strain ATCC 700825 / FA 1090).